Consider the following 309-residue polypeptide: Probable RuBisCO transcriptional regulator (309 aa).

The HTH lysR-type domain occupies 5-62 (FTLQQLRILKAIATEKSFTRAAEVLFVSQPSLSKQIKTLESRLNISLLNRENNIVSLT). Residues 22–41 (FTRAAEVLFVSQPSLSKQIK) constitute a DNA-binding region (H-T-H motif).

The protein belongs to the LysR transcriptional regulatory family.

It localises to the plastid. The protein localises to the chloroplast. Its function is as follows. Trans-acting transcriptional regulator of RuBisCO genes (rbcL and rbcS) expression. The polypeptide is Probable RuBisCO transcriptional regulator (rbcR) (Trieres chinensis (Marine centric diatom)).